Reading from the N-terminus, the 71-residue chain is UPF0499 protein ACLA_083080 (71 aa).

The N-terminal stretch at 1–18 (MKFLNILTLAFITGMASA) is a signal peptide. 3 disulfide bridges follow: cysteine 44-cysteine 58, cysteine 48-cysteine 61, and cysteine 54-cysteine 68.

This sequence belongs to the UPF0499 family.

It localises to the secreted. The chain is UPF0499 protein ACLA_083080 from Aspergillus clavatus (strain ATCC 1007 / CBS 513.65 / DSM 816 / NCTC 3887 / NRRL 1 / QM 1276 / 107).